A 483-amino-acid polypeptide reads, in one-letter code: Membrane-bound lytic murein transglycosylase F (483 aa).

The signal sequence occupies residues 1–18 (MKGLIARFIAGFALLLWA). The segment at 19–267 (WDMVFPWQQL…RIEEKYFNHL (249 aa)) is non-LT domain. The interval 269–483 (HFDYVDIQSY…SKESDSTLKE (215 aa)) is LT domain. E312 is an active-site residue. Residues 459–483 (QIQNNEEQSSVPQEISKESDSTLKE) are disordered. The span at 473 to 483 (ISKESDSTLKE) shows a compositional bias: basic and acidic residues.

In the N-terminal section; belongs to the bacterial solute-binding protein 3 family. It in the C-terminal section; belongs to the transglycosylase Slt family.

It is found in the cell outer membrane. It catalyses the reaction Exolytic cleavage of the (1-&gt;4)-beta-glycosidic linkage between N-acetylmuramic acid (MurNAc) and N-acetylglucosamine (GlcNAc) residues in peptidoglycan, from either the reducing or the non-reducing ends of the peptidoglycan chains, with concomitant formation of a 1,6-anhydrobond in the MurNAc residue.. In terms of biological role, murein-degrading enzyme that degrades murein glycan strands and insoluble, high-molecular weight murein sacculi, with the concomitant formation of a 1,6-anhydromuramoyl product. Lytic transglycosylases (LTs) play an integral role in the metabolism of the peptidoglycan (PG) sacculus. Their lytic action creates space within the PG sacculus to allow for its expansion as well as for the insertion of various structures such as secretion systems and flagella. This Actinobacillus pleuropneumoniae serotype 7 (strain AP76) protein is Membrane-bound lytic murein transglycosylase F.